The primary structure comprises 221 residues: Interleukin-12 subunit alpha (221 aa).

The first 25 residues, 1–25, serve as a signal peptide directing secretion; the sequence is MCPLRSLLLISTLVLLHHLPHLSLG. Disulfide bonds link Cys39–Cys112, Cys66–Cys198, and Cys87–Cys125. Asn95 carries an N-linked (GlcNAc...) asparagine glycan.

The protein belongs to the IL-6 superfamily. Heterodimer with IL12B; disulfide-linked. This heterodimer is known as interleukin IL-12. Heterodimer with EBI3/IL27B; not disulfide-linked. This heterodimer is known as interleukin IL-35. Interacts with NBR1; this interaction promotes IL-12 secretion.

The protein resides in the secreted. In terms of biological role, heterodimerizes with IL12B to form the IL-12 cytokine or with EBI3/IL27B to form the IL-35 cytokine. IL-12 is primarily produced by professional antigen-presenting cells (APCs) such as B-cells and dendritic cells (DCs) as well as macrophages and granulocytes and regulates T-cell and natural killer-cell responses, induces the production of interferon-gamma (IFN-gamma), favors the differentiation of T-helper 1 (Th1) cells and is an important link between innate resistance and adaptive immunity. Mechanistically, exerts its biological effects through a receptor composed of IL12R1 and IL12R2 subunits. Binding to the receptor results in the rapid tyrosine phosphorylation of a number of cellular substrates including the JAK family kinases TYK2 and JAK2. In turn, recruited STAT4 gets phosphorylated and translocates to the nucleus where it regulates cytokine/growth factor responsive genes. As part of IL-35, plays essential roles in maintaining the immune homeostasis of the liver microenvironment and also functions as an immune-suppressive cytokine. Mediates biological events through unconventional receptors composed of IL12RB2 and gp130/IL6ST heterodimers or homodimers. Signaling requires the transcription factors STAT1 and STAT4, which form a unique heterodimer that binds to distinct DNA sites. This chain is Interleukin-12 subunit alpha (IL12A), found in Bubalus carabanensis (Swamp type water buffalo).